Consider the following 181-residue polypeptide: Oligoribonuclease (181 aa).

Positions 8-171 (LIWIDLEMTG…DDIRESVAEL (164 aa)) constitute an Exonuclease domain. The active site involves Tyr129.

It belongs to the oligoribonuclease family.

The protein resides in the cytoplasm. 3'-to-5' exoribonuclease specific for small oligoribonucleotides. In Klebsiella pneumoniae subsp. pneumoniae (strain ATCC 700721 / MGH 78578), this protein is Oligoribonuclease.